Consider the following 546-residue polypeptide: Glucose-6-phosphate isomerase (546 aa).

Glu-353 acts as the Proton donor in catalysis. Catalysis depends on residues His-384 and Lys-512.

It belongs to the GPI family.

It is found in the cytoplasm. The catalysed reaction is alpha-D-glucose 6-phosphate = beta-D-fructose 6-phosphate. It functions in the pathway carbohydrate biosynthesis; gluconeogenesis. It participates in carbohydrate degradation; glycolysis; D-glyceraldehyde 3-phosphate and glycerone phosphate from D-glucose: step 2/4. In terms of biological role, catalyzes the reversible isomerization of glucose-6-phosphate to fructose-6-phosphate. The sequence is that of Glucose-6-phosphate isomerase from Methylococcus capsulatus (strain ATCC 33009 / NCIMB 11132 / Bath).